Reading from the N-terminus, the 425-residue chain is Sucrose-phosphatase 1 (425 aa).

This sequence belongs to the sucrose phosphatase family. In terms of assembly, homodimer. Mg(2+) serves as cofactor.

It catalyses the reaction sucrose 6(F)-phosphate + H2O = sucrose + phosphate. It functions in the pathway glycan biosynthesis; sucrose biosynthesis; sucrose from D-fructose 6-phosphate and UDP-alpha-D-glucose: step 2/2. With respect to regulation, inhibited by EDTA. In terms of biological role, catalyzes the final step of sucrose synthesis. This Nicotiana tabacum (Common tobacco) protein is Sucrose-phosphatase 1 (SPP1).